The chain runs to 373 residues: Dual-specificity RNA methyltransferase RlmN (373 aa).

The active-site Proton acceptor is glutamate 94. The region spanning 100–339 (EDDRATLCVS…VIVRKTRGDD (240 aa)) is the Radical SAM core domain. Cysteines 107 and 344 form a disulfide. [4Fe-4S] cluster is bound by residues cysteine 114, cysteine 118, and cysteine 121. Residues 168–169 (GE), serine 200, 222–224 (SIH), and asparagine 301 contribute to the S-adenosyl-L-methionine site. Cysteine 344 (S-methylcysteine intermediate) is an active-site residue.

It belongs to the radical SAM superfamily. RlmN family. It depends on [4Fe-4S] cluster as a cofactor.

The protein resides in the cytoplasm. It carries out the reaction adenosine(2503) in 23S rRNA + 2 reduced [2Fe-2S]-[ferredoxin] + 2 S-adenosyl-L-methionine = 2-methyladenosine(2503) in 23S rRNA + 5'-deoxyadenosine + L-methionine + 2 oxidized [2Fe-2S]-[ferredoxin] + S-adenosyl-L-homocysteine. The catalysed reaction is adenosine(37) in tRNA + 2 reduced [2Fe-2S]-[ferredoxin] + 2 S-adenosyl-L-methionine = 2-methyladenosine(37) in tRNA + 5'-deoxyadenosine + L-methionine + 2 oxidized [2Fe-2S]-[ferredoxin] + S-adenosyl-L-homocysteine. Specifically methylates position 2 of adenine 2503 in 23S rRNA and position 2 of adenine 37 in tRNAs. m2A2503 modification seems to play a crucial role in the proofreading step occurring at the peptidyl transferase center and thus would serve to optimize ribosomal fidelity. This Shewanella baltica (strain OS155 / ATCC BAA-1091) protein is Dual-specificity RNA methyltransferase RlmN.